We begin with the raw amino-acid sequence, 95 residues long: Ubiquinol-cytochrome-c reductase complex assembly factor 3 (95 aa).

The Mitochondrial matrix portion of the chain corresponds to 1 to 7; the sequence is MTTLRKL. Residues 8 to 28 traverse the membrane as a helical segment; it reads LLVGALLGAGAGVGTALFALV. Positions 23–80 are mediates lipid-binding; sequence ALFALVTPGEERKQAMLKEMPEQYPQRRDEAARTKELLLATLQEAAATQENVAWRKNW. The Mitochondrial intermembrane segment spans residues 29–95; sequence TPGEERKQAM…GGGGGGGRSA (67 aa).

This sequence belongs to the UQCC3 family. Associates with the ubiquinol-cytochrome c reductase complex (mitochondrial respiratory chain complex III(CIII) or cytochrome b-c1 complex). Interacts with UQCC1. Forms a complex, named COMC, composed of UQCC1, UQCC2; UQCC3 and UQCC4; mediates MT-CYB hemylation and association with the first nuclear-encoded complex III subunit UQCRQ. In terms of processing, probably cleaved by OMA1 under mitochondrial stress conditions.

It is found in the mitochondrion inner membrane. Its function is as follows. Required for the assembly of the ubiquinol-cytochrome c reductase complex (mitochondrial respiratory chain complex III or cytochrome b-c1 complex), mediating cytochrome b recruitment and probably stabilization within the complex. Thereby, plays an important role in ATP production by mitochondria. Cardiolipin-binding protein, it may also control the cardiolipin composition of mitochondria membranes and their morphology. This chain is Ubiquinol-cytochrome-c reductase complex assembly factor 3, found in Bos taurus (Bovine).